Here is a 440-residue protein sequence, read N- to C-terminus: Light-independent protochlorophyllide reductase subunit N (440 aa).

[4Fe-4S] cluster-binding residues include Cys-15, Cys-40, and Cys-99.

Belongs to the BchN/ChlN family. As to quaternary structure, protochlorophyllide reductase is composed of three subunits; BchL, BchN and BchB. Forms a heterotetramer of two BchB and two BchN subunits. Requires [4Fe-4S] cluster as cofactor.

It carries out the reaction chlorophyllide a + oxidized 2[4Fe-4S]-[ferredoxin] + 2 ADP + 2 phosphate = protochlorophyllide a + reduced 2[4Fe-4S]-[ferredoxin] + 2 ATP + 2 H2O. It functions in the pathway porphyrin-containing compound metabolism; bacteriochlorophyll biosynthesis (light-independent). Component of the dark-operative protochlorophyllide reductase (DPOR) that uses Mg-ATP and reduced ferredoxin to reduce ring D of protochlorophyllide (Pchlide) to form chlorophyllide a (Chlide). This reaction is light-independent. The NB-protein (BchN-BchB) is the catalytic component of the complex. In Heliobacterium mobile (Heliobacillus mobilis), this protein is Light-independent protochlorophyllide reductase subunit N.